The primary structure comprises 101 residues: ATP-dependent Clp protease adapter protein ClpS (101 aa).

Belongs to the ClpS family. Binds to the N-terminal domain of the chaperone ClpA.

Involved in the modulation of the specificity of the ClpAP-mediated ATP-dependent protein degradation. In Treponema denticola (strain ATCC 35405 / DSM 14222 / CIP 103919 / JCM 8153 / KCTC 15104), this protein is ATP-dependent Clp protease adapter protein ClpS.